A 38-amino-acid polypeptide reads, in one-letter code: Large ribosomal subunit protein bL36 (38 aa).

It belongs to the bacterial ribosomal protein bL36 family.

The polypeptide is Large ribosomal subunit protein bL36 (Prochlorococcus marinus (strain MIT 9312)).